A 535-amino-acid chain; its full sequence is Solute carrier family 22 member 7 (535 aa).

A run of 12 helical transmembrane segments spans residues 21–41 (LVLM…PVFM), 144–164 (ITST…GYLS), 178–198 (VSSL…MFVV), 202–222 (LTGS…LEWL), 232–252 (VIST…GYLI), 257–277 (WLLL…WWVP), 344–364 (ISLC…GLTL), 375–395 (QTQL…YFLV), 402–422 (LTEA…LLVS), 429–449 (ITAL…TAYL), 464–484 (LGLT…AALL), and 489–509 (LLLP…TALL).

This sequence belongs to the major facilitator (TC 2.A.1) superfamily. Organic cation transporter (TC 2.A.1.19) family. As to expression, expressed in liver and kidney. Expressed at low levels in adipose tissue. Expressed in fetal liver. In kidney, expressed at the brush border of the proximal tubule S3 segment (S3) in the outer stripe and medullary rays. In kidney, expression is higher in female than male.

Its subcellular location is the basolateral cell membrane. It localises to the apical cell membrane. The protein resides in the cell membrane. It carries out the reaction orotate(out) + L-glutamate(in) = orotate(in) + L-glutamate(out). The enzyme catalyses 3',5'-cyclic GMP(in) = 3',5'-cyclic GMP(out). The catalysed reaction is GMP(in) = GMP(out). It catalyses the reaction 2'-deoxyguanosine(in) = 2'-deoxyguanosine(out). It carries out the reaction GDP(in) = GDP(out). The enzyme catalyses guanosine(in) = guanosine(out). The catalysed reaction is GTP(in) = GTP(out). It catalyses the reaction 3',5'-cyclic AMP(in) = 3',5'-cyclic AMP(out). It carries out the reaction creatinine(in) = creatinine(out). The enzyme catalyses prostaglandin E2(out) = prostaglandin E2(in). The catalysed reaction is 2-oxoglutarate(in) = 2-oxoglutarate(out). It catalyses the reaction glutarate(in) = glutarate(out). It carries out the reaction urate(out) = urate(in). The enzyme catalyses estrone 3-sulfate(out) = estrone 3-sulfate(in). Functions as a Na(+)-independent bidirectional multispecific transporter. Contributes to the renal and hepatic elimination of endogenous organic compounds from the systemic circulation into the urine and bile, respectively. Capable of transporting a wide range of purine and pyrimidine nucleobases, nucleosides, and nucleotides with cGMP, 2'deoxyguanosine and GMP being the preferred substrates. Functions as a pH- and chloride-independent cGMP bidirectional facilitative transporter that can regulate both intracellular and extracellular levels of cGMP and may be involved in cGMP signaling pathways. Mediates orotate/glutamate bidirectional exchange and most likely display a physiological role in hepatic release of glutamate into the blood. Involved in renal secretion and possible reabsorption of creatinine. Able to uptake prostaglandin E2 (PGE2) and may contribute to PGE2 renal excretion. Also transports alpha-ketoglutarate and urate. Apart from the orotate/glutamate exchange, the counterions for the uptake of other SLC22A7/OAT2 substrates remain to be identified. The sequence is that of Solute carrier family 22 member 7 from Rattus norvegicus (Rat).